The following is a 188-amino-acid chain: Elongation factor P (188 aa).

Position 34 is an N6-(3,6-diaminohexanoyl)-5-hydroxylysine (Lys34).

This sequence belongs to the elongation factor P family. May be beta-lysylated on the epsilon-amino group of Lys-34 by the combined action of EpmA and EpmB, and then hydroxylated on the C5 position of the same residue by EpmC (if this protein is present). Lysylation is critical for the stimulatory effect of EF-P on peptide-bond formation. The lysylation moiety may extend toward the peptidyltransferase center and stabilize the terminal 3-CCA end of the tRNA. Hydroxylation of the C5 position on Lys-34 may allow additional potential stabilizing hydrogen-bond interactions with the P-tRNA.

It localises to the cytoplasm. It functions in the pathway protein biosynthesis; polypeptide chain elongation. Functionally, involved in peptide bond synthesis. Alleviates ribosome stalling that occurs when 3 or more consecutive Pro residues or the sequence PPG is present in a protein, possibly by augmenting the peptidyl transferase activity of the ribosome. Modification of Lys-34 is required for alleviation. In Stenotrophomonas maltophilia (strain K279a), this protein is Elongation factor P.